The primary structure comprises 366 residues: 3-isopropylmalate dehydrogenase (366 aa).

An NAD(+)-binding site is contributed by Gly-76–Glu-89. 4 residues coordinate substrate: Arg-96, Arg-106, Arg-134, and Asp-219. Asp-219, Asp-243, and Asp-247 together coordinate Mg(2+). NAD(+) is bound at residue Gly-277 to Asn-289.

It belongs to the isocitrate and isopropylmalate dehydrogenases family. LeuB type 1 subfamily. Homodimer. Requires Mg(2+) as cofactor. Mn(2+) is required as a cofactor.

Its subcellular location is the cytoplasm. It carries out the reaction (2R,3S)-3-isopropylmalate + NAD(+) = 4-methyl-2-oxopentanoate + CO2 + NADH. It functions in the pathway amino-acid biosynthesis; L-leucine biosynthesis; L-leucine from 3-methyl-2-oxobutanoate: step 3/4. In terms of biological role, catalyzes the oxidation of 3-carboxy-2-hydroxy-4-methylpentanoate (3-isopropylmalate) to 3-carboxy-4-methyl-2-oxopentanoate. The product decarboxylates to 4-methyl-2 oxopentanoate. In Oceanobacillus iheyensis (strain DSM 14371 / CIP 107618 / JCM 11309 / KCTC 3954 / HTE831), this protein is 3-isopropylmalate dehydrogenase.